Consider the following 270-residue polypeptide: 4-hydroxy-tetrahydrodipicolinate reductase (270 aa).

NAD(+) is bound by residues G11–M16 and E37. Residue R38 participates in NADP(+) binding. NAD(+) is bound by residues G101–T103 and A125–M128. Residue H158 is the Proton donor/acceptor of the active site. Residue H159 coordinates (S)-2,3,4,5-tetrahydrodipicolinate. K162 serves as the catalytic Proton donor. (S)-2,3,4,5-tetrahydrodipicolinate is bound at residue G168 to T169.

The protein belongs to the DapB family.

It is found in the cytoplasm. The catalysed reaction is (S)-2,3,4,5-tetrahydrodipicolinate + NAD(+) + H2O = (2S,4S)-4-hydroxy-2,3,4,5-tetrahydrodipicolinate + NADH + H(+). It catalyses the reaction (S)-2,3,4,5-tetrahydrodipicolinate + NADP(+) + H2O = (2S,4S)-4-hydroxy-2,3,4,5-tetrahydrodipicolinate + NADPH + H(+). It functions in the pathway amino-acid biosynthesis; L-lysine biosynthesis via DAP pathway; (S)-tetrahydrodipicolinate from L-aspartate: step 4/4. Its function is as follows. Catalyzes the conversion of 4-hydroxy-tetrahydrodipicolinate (HTPA) to tetrahydrodipicolinate. This Shewanella sp. (strain ANA-3) protein is 4-hydroxy-tetrahydrodipicolinate reductase.